The following is a 430-amino-acid chain: Tektin-2 (430 aa).

Coiled-coil stretches lie at residues Lys-75–Leu-162 and Lys-226–Lys-380.

The protein belongs to the tektin family. Microtubule inner protein component of sperm flagellar doublet microtubules. May interact with CCDC172. Ubiquitinated, leading to its degradation. Deubiquitinated by USP16, promoting its stability. In terms of processing, tyrosine phosphorylated. As to expression, expressed in the testes (at protein level).

It localises to the cytoplasm. Its subcellular location is the cytoskeleton. It is found in the cilium axoneme. The protein resides in the flagellum axoneme. The protein localises to the microtubule organizing center. In terms of biological role, microtubule inner protein (MIP) part of the dynein-decorated doublet microtubules (DMTs) in cilia and flagellar axoneme. Plays a key role in the assembly or attachment of the inner dynein arm to microtubules in sperm flagella and tracheal cilia. Forms filamentous polymers in the walls of ciliary and flagellar microtubules. The chain is Tektin-2 (Tekt2) from Mus musculus (Mouse).